Here is a 467-residue protein sequence, read N- to C-terminus: Glutamate--tRNA ligase (467 aa).

The 'HIGH' region motif lies at 10–20 (PSPTGHLHIGG). Zn(2+)-binding residues include C99, C101, C126, and E128. Positions 236-240 (RLSKR) match the 'KMSKS' region motif. K239 contacts ATP.

This sequence belongs to the class-I aminoacyl-tRNA synthetase family. Glutamate--tRNA ligase type 1 subfamily. In terms of assembly, monomer. Requires Zn(2+) as cofactor.

The protein resides in the cytoplasm. It catalyses the reaction tRNA(Glu) + L-glutamate + ATP = L-glutamyl-tRNA(Glu) + AMP + diphosphate. Catalyzes the attachment of glutamate to tRNA(Glu) in a two-step reaction: glutamate is first activated by ATP to form Glu-AMP and then transferred to the acceptor end of tRNA(Glu). The protein is Glutamate--tRNA ligase of Desulfosudis oleivorans (strain DSM 6200 / JCM 39069 / Hxd3) (Desulfococcus oleovorans).